Reading from the N-terminus, the 517-residue chain is MNVFFMFSLLFLAALESCADDRRRPLEECFQEADYEEFLEIARNGLNETSNPKHVVVVGAGMAGLSAAYVLAGAGHNVTLLEASERVGGRVNTYRNETEGWYVNLGPMRLPERHRIIREYIRKFGLKLNEFLQENENAWYFIRNIRKRVWEVKKDPGVFKYPVEPSEEGKSASQLYRESLEKVIEELKRTNCSYILNKYDTYSTKEYLIKEGNLSRGAVDMIGKLPNEDSSYYLSFIESLKSDDLFSYEKRFDEIVGGFDQLPISMYQAIAEMVHLNAQVIKIQHNAEEVRVAYQTPAKTLSYVTADYVIVCSTSRAARRIYFEPPLPPKKAHALRSIHYRSGTKIFLTCTRKFWEADGIHGGKSTTDLPSRFIYYPNHNFTSDVGVIVAYTLADDADFFQALDIKTSADIVINDLSLIHQLPKEEIQALCYPSMIKKWSLDKYAMGAITSFTPYQFQDFIETVAAPVGRIYFAGEYTARVHGWLDSTIKSGLTAARDVNRASQKPSRRQLSNDNEL.

The signal sequence occupies residues 1-18 (MNVFFMFSLLFLAALESC). Residues cysteine 29 and cysteine 192 are joined by a disulfide bond. Residues 62–63 (MA), 82–83 (EA), arginine 90, and 106–109 (GPMR) each bind FAD. Position 109 (arginine 109) interacts with substrate. The N-linked (GlcNAc...) asparagine glycan is linked to asparagine 191. Valine 280 serves as a coordination point for FAD. Cysteine 350 and cysteine 431 form a disulfide bridge. Asparagine 380 carries an N-linked (GlcNAc...) asparagine glycan. Residue tyrosine 391 coordinates substrate. FAD is bound by residues glutamate 476 and 483–488 (GWLDST). 483–484 (GW) contacts substrate.

It belongs to the flavin monoamine oxidase family. FIG1 subfamily. As to quaternary structure, homodimer; non-covalently linked. The cofactor is FAD. N-glycosylated. In terms of tissue distribution, expressed by the venom gland.

Its subcellular location is the secreted. The catalysed reaction is an L-alpha-amino acid + O2 + H2O = a 2-oxocarboxylate + H2O2 + NH4(+). Catalyzes an oxidative deamination of predominantly hydrophobic and aromatic L-amino acids, thus producing hydrogen peroxide that may contribute to the diverse toxic effects of this enzyme. Exhibits diverse biological activities, such as hemorrhage, hemolysis, edema, apoptosis of vascular endothelial cells or tumor cell lines, antibacterial and antiparasitic activities, as well as regulation of platelet aggregation. Effects of snake L-amino oxidases on platelets are controversial, since they either induce aggregation or inhibit agonist-induced aggregation. These different effects are probably due to different experimental conditions. In Notechis scutatus scutatus (Mainland tiger snake), this protein is L-amino-acid oxidase.